The chain runs to 193 residues: Flagellin B3 (193 aa).

The propeptide occupies 1–12; it reads MFEFITDEDERG.

This sequence belongs to the archaeal flagellin family. Glycosylated.

The protein resides in the archaeal flagellum. Its function is as follows. Flagellin is the subunit protein which polymerizes to form the filaments of archaeal flagella. This Halobacterium salinarum (strain ATCC 700922 / JCM 11081 / NRC-1) (Halobacterium halobium) protein is Flagellin B3 (flaB3).